The chain runs to 715 residues: Tegument protein UL46 (715 aa).

Disordered stretches follow at residues 432-513 (WSAG…CAAQ), 585-605 (DDARRKATHAASARERHAPYE), and 659-680 (GSALFSPPPRPPPPPPLSPSPV). Residues 444–455 (GPGGHRAGGGTV) are compositionally biased toward gly residues. Low complexity-rich tracts occupy residues 456–467 (GKRFSGPARQRA) and 475–488 (PTLDPRGHPAVPEA). The span at 664 to 677 (SPPPRPPPPPPLSP) shows a compositional bias: pro residues.

It belongs to the herpesviridae HHV-1 VP11/12 protein family. In terms of assembly, interacts with VP16. Interacts with host LCK, PIK3R1, SHC1 AND GRB2; these interactions promote the activation of the PI3K/AKT pathway. Interacts with host YWHAB. Interacts with ICP0; this interaction targets UL46 for degradation by the proteasome. In terms of processing, phosphorylated by host LCK. The phosphorylation seems to be lymphocyte-specific.

It is found in the virion tegument. The protein resides in the host cell membrane. Functionally, plays a role in the activation of the host PI3K/AKT pathway to promote cell survival. Interacts with and activates host LCK and thereby recruits downstream partners SHC1, GRB2 and PI3KR1 in order to activate the PI3K pathway by phosphorylating host AKT on its activating residues. This mechanism is inhibited by the viral protein US3 that instead promotes incorporation of UL46 into virions. The polypeptide is Tegument protein UL46 (Human herpesvirus 1 (strain F) (HHV-1)).